The following is a 104-amino-acid chain: Phosphate metabolism protein 6 (104 aa).

Residues Ile-76–Val-96 traverse the membrane as a helical segment.

The protein resides in the vacuole membrane. This chain is Phosphate metabolism protein 6 (PHM6), found in Saccharomyces cerevisiae (strain ATCC 204508 / S288c) (Baker's yeast).